A 461-amino-acid polypeptide reads, in one-letter code: ATP synthase subunit beta 2 (461 aa).

151-158 (GGAGVGKT) contributes to the ATP binding site.

The protein belongs to the ATPase alpha/beta chains family. In terms of assembly, F-type ATPases have 2 components, CF(1) - the catalytic core - and CF(0) - the membrane proton channel. CF(1) has five subunits: alpha(3), beta(3), gamma(1), delta(1), epsilon(1). CF(0) has three main subunits: a(1), b(2) and c(9-12). The alpha and beta chains form an alternating ring which encloses part of the gamma chain. CF(1) is attached to CF(0) by a central stalk formed by the gamma and epsilon chains, while a peripheral stalk is formed by the delta and b chains.

It localises to the cell inner membrane. The enzyme catalyses ATP + H2O + 4 H(+)(in) = ADP + phosphate + 5 H(+)(out). In terms of biological role, produces ATP from ADP in the presence of a proton gradient across the membrane. The catalytic sites are hosted primarily by the beta subunits. The chain is ATP synthase subunit beta 2 from Photobacterium profundum (strain SS9).